The following is a 230-amino-acid chain: Thiamine-triphosphatase (230 aa).

At A2 the chain carries N-acetylalanine. In terms of domain architecture, CYTH spans 5–201 (LIEVERKFLP…AKLIVYLQRF (197 aa)). Mg(2+)-binding residues include E7 and E9. K11, R55, R57, K65, and R125 together coordinate substrate. Residues D145, E157, and E159 each coordinate Mg(2+). Substrate is bound at residue E157. Position 193 (K193) interacts with substrate.

This sequence belongs to the ThTPase family. In terms of assembly, monomer. Requires Mg(2+) as cofactor. In terms of tissue distribution, widely expressed but at a low level.

It localises to the cytoplasm. It carries out the reaction thiamine triphosphate + H2O = thiamine diphosphate + phosphate + H(+). Its function is as follows. Hydrolase highly specific for thiamine triphosphate (ThTP). This Homo sapiens (Human) protein is Thiamine-triphosphatase (THTPA).